The primary structure comprises 254 residues: MSLTNKNVVFVAGLGGIGLDTSRELVKRNLKNLVILDRIDNPAAIAELKAINPKVTITFYPYDVTVPVAETTKLLKTIFAQVKTIDVLINGAGILDDHQIERTIAVNYTGLVNTTTAILDFWDKRKGGPGGIICNIGSVTGFNAIYQVPVYSGSKAAVVNFTSSLAKLAPITGVTAYTVNPGITRTTLVHKFNSWLDVEPRVAEKLLEHPTQTSQQCAENFVKAIELNKNGAIWKLDLGTLEPITWTQHWDSGI.

10–33 (FVAGLGGIGLDTSRELVKRNLKNL) is an NAD(+) binding site. Serine 138 is a substrate binding site. Tyrosine 151 acts as the Proton acceptor in catalysis.

It belongs to the short-chain dehydrogenases/reductases (SDR) family. In terms of assembly, homodimer.

The enzyme catalyses a primary alcohol + NAD(+) = an aldehyde + NADH + H(+). It catalyses the reaction a secondary alcohol + NAD(+) = a ketone + NADH + H(+). This chain is Alcohol dehydrogenase (Adh), found in Drosophila persimilis (Fruit fly).